A 380-amino-acid polypeptide reads, in one-letter code: UDP-N-acetylglucosamine 2-epimerase (380 aa).

Belongs to the UDP-N-acetylglucosamine 2-epimerase family.

Its subcellular location is the cytoplasm. The enzyme catalyses UDP-N-acetyl-alpha-D-glucosamine = UDP-N-acetyl-alpha-D-mannosamine. It functions in the pathway cell wall biogenesis; poly(glycerol phosphate) teichoic acid biosynthesis. Its function is as follows. Catalyzes the conversion of UDP-N-acetylglucosamine into UDP-N-acetylmannosamine, a precursor of the teichoic acid linkage unit. The polypeptide is UDP-N-acetylglucosamine 2-epimerase (mnaA) (Bacillus subtilis (strain 168)).